The chain runs to 444 residues: Alpha-(1,3)-fucosyltransferase B (444 aa).

The Cytoplasmic portion of the chain corresponds to 1-6; the sequence is MRLAQR. A helical; Signal-anchor for type II membrane protein membrane pass occupies residues 7–27; that stretch reads YGIALVALLMVGATVLFFWSE. Residues 28–444 are Lumenal-facing; that stretch reads NIINYENIKF…GNNCSNSSNT (417 aa). N-linked (GlcNAc...) asparagine glycans are attached at residues Asn279, Asn437, and Asn440.

Belongs to the glycosyltransferase 10 family.

It localises to the golgi apparatus. The protein localises to the golgi stack membrane. The protein operates within protein modification; protein glycosylation. The sequence is that of Alpha-(1,3)-fucosyltransferase B (FucTB) from Drosophila melanogaster (Fruit fly).